Reading from the N-terminus, the 163-residue chain is Protein-export protein SecB (163 aa).

This sequence belongs to the SecB family. Homotetramer, a dimer of dimers. One homotetramer interacts with 1 SecA dimer.

It localises to the cytoplasm. Functionally, one of the proteins required for the normal export of preproteins out of the cell cytoplasm. It is a molecular chaperone that binds to a subset of precursor proteins, maintaining them in a translocation-competent state. It also specifically binds to its receptor SecA. The sequence is that of Protein-export protein SecB from Brucella anthropi (strain ATCC 49188 / DSM 6882 / CCUG 24695 / JCM 21032 / LMG 3331 / NBRC 15819 / NCTC 12168 / Alc 37) (Ochrobactrum anthropi).